The primary structure comprises 379 residues: MPFEARDDNVDPDAIGNHYHDDGLLWQTHYAAVEVFDYPHATMHMKIFCQSYWGELHDLTFSYKRGSTKEPEEENAWETKFRQSLARPGTDEAAMMHTPLAAVVRYDTGNPTTHLFYISTGFKIREVIWKNGSQTNDCLGITVCPTSSLAVTKWGAGSQTHFRLYYQSKAGTIEEHCLDCNAGTWTKGATLSGPVSAYDDDSPLRGTSLSFINLAQDKPELRGYFQTAKGSIQEFTYKGTKWSTSKIGVDAAPFRTPLAAITVEKNKIAALYYVDAYNRINEVLWEGDWEGSERIDGESVAPGTRLAVASLKYIGHDKIHMFSSGLVNVITQRVWTRENGAWGDRPTIVDFEAPVQVEVEPGLDPAIHLTKPTRDGRRV.

An alpha-L-fucose-binding site is contributed by E126. Beta-L-fucose-binding residues include E126, R163, and W185. Alpha-L-fucose-binding residues include W185, R222, and E234. Beta-L-fucose contacts are provided by W242 and E282. W289 provides a ligand contact to alpha-L-fucose.

Belongs to the fungal fucose-specific lectin family.

Functionally, lectin that specifically binds to L-fucose. Is associated with the morphogenesis of the fungus, and plays a role in the formation of the constricting rings involved in nematode-trapping. In Arthrobotrys oligospora (strain ATCC 24927 / CBS 115.81 / DSM 1491) (Nematode-trapping fungus), this protein is Fucose-specific lectin g276.